The sequence spans 318 residues: Phosphatidylglycerol--prolipoprotein diacylglyceryl transferase (318 aa).

3 consecutive transmembrane segments (helical) span residues 24–44, 60–80, and 115–135; these read GPST…YLLP, LLLL…VFEI, and LFSG…LFIT. Arg164 is an a 1,2-diacyl-sn-glycero-3-phospho-(1'-sn-glycerol) binding site. Helical transmembrane passes span 198 to 218 and 285 to 305; these read VPVW…FFYF and GFSQ…FFIL.

It belongs to the Lgt family.

It is found in the cell inner membrane. It catalyses the reaction L-cysteinyl-[prolipoprotein] + a 1,2-diacyl-sn-glycero-3-phospho-(1'-sn-glycerol) = an S-1,2-diacyl-sn-glyceryl-L-cysteinyl-[prolipoprotein] + sn-glycerol 1-phosphate + H(+). Its pathway is protein modification; lipoprotein biosynthesis (diacylglyceryl transfer). Functionally, catalyzes the transfer of the diacylglyceryl group from phosphatidylglycerol to the sulfhydryl group of the N-terminal cysteine of a prolipoprotein, the first step in the formation of mature lipoproteins. The chain is Phosphatidylglycerol--prolipoprotein diacylglyceryl transferase from Leptospira interrogans serogroup Icterohaemorrhagiae serovar copenhageni (strain Fiocruz L1-130).